The sequence spans 279 residues: DegV domain-containing protein SpyM3_1149 (279 aa).

Residues 4 to 278 (IKIVTDSSIT…EGAFAVMVRY (275 aa)) form the DegV domain. Hexadecanoate contacts are provided by Thr-62 and Ser-95.

In terms of biological role, may bind long-chain fatty acids, such as palmitate, and may play a role in lipid transport or fatty acid metabolism. The chain is DegV domain-containing protein SpyM3_1149 from Streptococcus pyogenes serotype M3 (strain ATCC BAA-595 / MGAS315).